Consider the following 928-residue polypeptide: TBC1 domain family member 2A (928 aa).

M1 carries the post-translational modification N-acetylmethionine. Positions 1–19 (MEGAGENAPESSSSAPGSE) are enriched in low complexity. Positions 1–39 (MEGAGENAPESSSSAPGSEESARDPQVPPPEEESGDCAR) are disordered. Positions 1 to 169 (MEGAGENAPE…AGNGPVLHLE (169 aa)) are interaction with CADH1. The PH domain occupies 45-142 (PKKLCGYLSK…WLQQLQMKRW (98 aa)). Residues 225–275 (NKQAQGTGHEPPGEDSPQSGEPQREEQPLASDASTPGREPEDSPKPAPKPS) are disordered. The interval 295–433 (SEGITRNRTA…KVTQDFTHPP (139 aa)) is interaction with RAC1. Positions 298–416 (ITRNRTAQEK…LMDKNHAKQQ (119 aa)) form a coiled coil. S436 bears the Phosphoserine mark. A Rab-GAP TBC domain is found at 625 to 817 (GVPREHRPRV…RVWDAFLYEG (193 aa)). The stretch at 875–913 (MKQLRQLRMVHRERLEAELRELEQLKAEYLERRASRRRA) forms a coiled coil. Phosphoserine is present on residues S915 and S920.

Interacts with activated RAC1 and CDH1. In terms of tissue distribution, expressed in a broad range of tissues, especially in kidney, liver, lung and placenta. Also expressed in keratinocytes and epithelia-containing organs. Isoform 2 is differentially expressed in prostate normal and cancer cells (at protein level).

The protein resides in the cytoplasm. It localises to the cytoplasmic vesicle. The protein localises to the cell junction. Functionally, acts as a GTPase-activating protein for RAB7A. Signal effector acting as a linker between RAC1 and RAB7A, leading to RAB7A inactivation and subsequent inhibition of cadherin degradation and reduced cell-cell adhesion. The polypeptide is TBC1 domain family member 2A (TBC1D2) (Homo sapiens (Human)).